A 142-amino-acid polypeptide reads, in one-letter code: Small ribosomal subunit protein bS18c (142 aa).

The segment at 1-21 (MDRITGPFRKSKKSFRKPLPP) is disordered.

It belongs to the bacterial ribosomal protein bS18 family. As to quaternary structure, part of the 30S ribosomal subunit.

It localises to the plastid. This chain is Small ribosomal subunit protein bS18c, found in Cuscuta gronovii (Common dodder).